Reading from the N-terminus, the 327-residue chain is Cytochrome c biogenesis protein CcsA (327 aa).

8 helical membrane-spanning segments follow: residues 13–33 (ISFSVVSIVLTIYFLTFLVNL), 46–66 (GIIITFFGITGLLFTRWIYSG), 73–93 (LYESLIFLAWAFSIIHMVSYF), 101–121 (LNAITAPSAIFIQGFAASGLL), 145–165 (MILGYGALLCGSLLSIALLVI), 233–253 (IISLGFIFLTIGILSGAVWAN), 262–282 (WDPKETWAFITWTIFAIYLHI), and 294–314 (AIVAAIGFLLIWICYFGVNLL).

This sequence belongs to the CcmF/CycK/Ccl1/NrfE/CcsA family. As to quaternary structure, may interact with Ccs1.

The protein localises to the plastid. Its subcellular location is the chloroplast thylakoid membrane. Functionally, required during biogenesis of c-type cytochromes (cytochrome c6 and cytochrome f) at the step of heme attachment. This is Cytochrome c biogenesis protein CcsA from Lobularia maritima (Sweet alyssum).